A 353-amino-acid chain; its full sequence is Outer membrane protein P5 (353 aa).

The first 21 residues, 1–21 (MKKTAIALVVAGLAAASVAQA), serve as a signal peptide directing secretion. The next 8 membrane-spanning stretches (beta stranded) occupy residues 27–37 (TFYAGVKAGQA), 58–69 (SFTYGVFGGYQI), 77–85 (LAVELGYDD), 104–115 (HGAHLSLKGSYE), 120–128 (LDVYGKAGV), 158–167 (GLFAVGAEYA), 172–179 (LAVRLEYQ), and 205–213 (SINAGISYR). An OmpA-like domain is found at 227–353 (VVSKTFSLNS…RVEIAVNGTK (127 aa)). A disulfide bridge links Cys-326 with Cys-338.

It belongs to the outer membrane OOP (TC 1.B.6) superfamily. OmpA family. In terms of assembly, monomer and homodimer.

The protein resides in the cell outer membrane. Its function is as follows. With TolR probably plays a role in maintaining the position of the peptidoglycan cell wall in the periplasm. Acts as a porin with low permeability that allows slow penetration of small solutes; an internal gate slows down solute passage. This Haemophilus influenzae protein is Outer membrane protein P5.